Here is a 192-residue protein sequence, read N- to C-terminus: uncharacterized protein (192 aa).

6 helical membrane-spanning segments follow: residues 5–22 (VPPL…GIGL), 42–61 (FLFL…HYVY), 66–88 (LRFL…SGKL), 101–118 (WGLL…ALNL), 122–139 (LVMW…STIL), and 159–181 (ALLL…LWLF).

Its subcellular location is the cell membrane. This is an uncharacterized protein from Treponema pallidum (strain Nichols).